The primary structure comprises 159 residues: D-aminoacyl-tRNA deacylase (159 aa).

Residues 146–147 (GP) carry the Gly-cisPro motif, important for rejection of L-amino acids motif.

Belongs to the DTD family. Homodimer.

It is found in the cytoplasm. The enzyme catalyses glycyl-tRNA(Ala) + H2O = tRNA(Ala) + glycine + H(+). The catalysed reaction is a D-aminoacyl-tRNA + H2O = a tRNA + a D-alpha-amino acid + H(+). Its function is as follows. An aminoacyl-tRNA editing enzyme that deacylates mischarged D-aminoacyl-tRNAs. Also deacylates mischarged glycyl-tRNA(Ala), protecting cells against glycine mischarging by AlaRS. Acts via tRNA-based rather than protein-based catalysis; rejects L-amino acids rather than detecting D-amino acids in the active site. By recycling D-aminoacyl-tRNA to D-amino acids and free tRNA molecules, this enzyme counteracts the toxicity associated with the formation of D-aminoacyl-tRNA entities in vivo and helps enforce protein L-homochirality. This is D-aminoacyl-tRNA deacylase from Bifidobacterium adolescentis (strain ATCC 15703 / DSM 20083 / NCTC 11814 / E194a).